Here is a 567-residue protein sequence, read N- to C-terminus: Proline--tRNA ligase (567 aa).

This sequence belongs to the class-II aminoacyl-tRNA synthetase family. ProS type 1 subfamily. Homodimer.

The protein resides in the cytoplasm. The catalysed reaction is tRNA(Pro) + L-proline + ATP = L-prolyl-tRNA(Pro) + AMP + diphosphate. Catalyzes the attachment of proline to tRNA(Pro) in a two-step reaction: proline is first activated by ATP to form Pro-AMP and then transferred to the acceptor end of tRNA(Pro). As ProRS can inadvertently accommodate and process non-cognate amino acids such as alanine and cysteine, to avoid such errors it has two additional distinct editing activities against alanine. One activity is designated as 'pretransfer' editing and involves the tRNA(Pro)-independent hydrolysis of activated Ala-AMP. The other activity is designated 'posttransfer' editing and involves deacylation of mischarged Ala-tRNA(Pro). The misacylated Cys-tRNA(Pro) is not edited by ProRS. This chain is Proline--tRNA ligase, found in Staphylococcus epidermidis (strain ATCC 35984 / DSM 28319 / BCRC 17069 / CCUG 31568 / BM 3577 / RP62A).